Consider the following 1144-residue polypeptide: Probable translation initiation factor IF-2 (1144 aa).

In terms of domain architecture, DOD-type homing endonuclease spans phenylalanine 232–isoleucine 362. The tr-type G domain occupies threonine 551 to leucine 768. GTP contacts are provided by residues aspartate 624–histidine 628 and asparagine 678–aspartate 681.

The protein belongs to the TRAFAC class translation factor GTPase superfamily. Classic translation factor GTPase family. IF-2 subfamily. This protein undergoes a protein self splicing that involves a post-translational excision of the intervening region (intein) followed by peptide ligation.

Function in general translation initiation by promoting the binding of the formylmethionine-tRNA to ribosomes. Seems to function along with eIF-2. The sequence is that of Probable translation initiation factor IF-2 (infB) from Thermococcus kodakarensis (strain ATCC BAA-918 / JCM 12380 / KOD1) (Pyrococcus kodakaraensis (strain KOD1)).